The sequence spans 250 residues: Anamorsin homolog 1 (250 aa).

An N-terminal SAM-like domain region spans residues 1 to 104; sequence MNLKITINQQ…KKLNIPQQEF (104 aa). Positions 104–149 are linker; the sequence is FNNCYGKYDYIEQKFQNQINFFKQVDINGKQEIIDENELLDDGVQV. Residues Cys-155, Cys-162, Cys-165, and Cys-167 each coordinate [2Fe-2S] cluster. Residues 155–167 form a fe-S binding site A region; it reads CASKPRACANCTC. [4Fe-4S] cluster contacts are provided by Cys-193, Cys-196, Cys-204, and Cys-207. 2 consecutive short sequence motifs (cx2C motif) follow at residues 193–196 and 204–207; these read CGSC and CANC. The segment at 193-207 is fe-S binding site B; that stretch reads CGSCYLGDAFRCANC.

This sequence belongs to the anamorsin family. Monomer. The cofactor is [2Fe-2S] cluster. Requires [4Fe-4S] cluster as cofactor.

It localises to the cytoplasm. The protein localises to the mitochondrion intermembrane space. In terms of biological role, component of the cytosolic iron-sulfur (Fe-S) protein assembly (CIA) machinery. Required for the maturation of extramitochondrial Fe-S proteins. Part of an electron transfer chain functioning in an early step of cytosolic Fe-S biogenesis, facilitating the de novo assembly of a [4Fe-4S] cluster on the cytosolic Fe-S scaffold complex. Electrons are transferred from NADPH via a FAD- and FMN-containing diflavin oxidoreductase. Together with the diflavin oxidoreductase, also required for the assembly of the diferric tyrosyl radical cofactor of ribonucleotide reductase (RNR), probably by providing electrons for reduction during radical cofactor maturation in the catalytic small subunit. This is Anamorsin homolog 1 from Paramecium tetraurelia.